We begin with the raw amino-acid sequence, 284 residues long: Tropomyosin (284 aa).

Residues methionine 1–tyrosine 284 are a coiled coil. The disordered stretch occupies residues arginine 105–glutamate 131.

Belongs to the tropomyosin family. Homodimer.

Its function is as follows. Tropomyosin, in association with the troponin complex, plays a central role in the calcium dependent regulation of muscle contraction. This Cornu aspersum (Brown garden snail) protein is Tropomyosin.